The sequence spans 722 residues: Transcription factor kayak, isoforms D/sro (722 aa).

The segment covering 173 to 188 (QHQTQQQHQSQQQQQH) has biased composition (low complexity). 3 disordered regions span residues 173-193 (QHQTQQQHQSQQQQQHQRQDY), 283-317 (LGQGSESEDSNASYNDTQMNEEQDTTDTSSAHTDS), and 350-407 (GSAS…KRRV). Polar residues predominate over residues 283 to 300 (LGQGSESEDSNASYNDTQ). 2 stretches are compositionally biased toward low complexity: residues 308–317 (TDTSSAHTDS) and 350–364 (GSASVGSSNANTSNT). The bZIP domain maps to 385–448 (EQKRAVRRER…NQLEYLLATH (64 aa)). A basic motif region spans residues 387 to 406 (KRAVRRERNKQAAARCRKRR). The tract at residues 413 to 420 (LTEEVEQL) is leucine-zipper. Positions 477-498 (AGSSGSGASSHHNHNSNDSSNG) are enriched in low complexity. Disordered stretches follow at residues 477–519 (AGSS…PLDL) and 683–722 (DGGTGLTPVSGPLVPNSSSTNKHPLELPTPTAEPSKLVSL). A compositionally biased stretch (polar residues) spans 506 to 516 (TLNSTGRSNSP). The residue at position 515 (S515) is a Phosphoserine.

This sequence belongs to the bZIP family. Fos subfamily. Homodimer. Heterodimer with Jra. The kay-Jra heterodimer binds more stably to the AP-1 site than either of the two proteins alone.

The protein resides in the nucleus. Its function is as follows. Developmentally regulated transcription factor AP-1 binds and recognizes the enhancer DNA sequence: 5'-TGA[CG]TCA-3'. May play a role in the function or determination of a particular subset of cells in the developing embryo. It is able to carry out its function either independently of or in conjunction with Jra. This chain is Transcription factor kayak, isoforms D/sro, found in Drosophila melanogaster (Fruit fly).